Reading from the N-terminus, the 111-residue chain is Resistin-like alpha (111 aa).

The signal sequence occupies residues 1–23 (MKTTTCSLLICISLLQLMVPVNT). 5 disulfides stabilise this stretch: Cys55–Cys108, Cys67–Cys107, Cys76–Cys93, Cys78–Cys95, and Cys82–Cys97.

The protein belongs to the resistin/FIZZ family. Monomer. Highest levels in adipose tissue.

It is found in the secreted. Functionally, probable hormone. Plays a role in pulmonary vascular remodeling. The protein is Resistin-like alpha (Retnla) of Mus musculus (Mouse).